Consider the following 379-residue polypeptide: Cytochrome b (379 aa).

4 helical membrane passes run 33-53 (FGSLLGMCLMIQILTGLFLAM), 77-98 (WLIRYLHANGASMFFICLFIHV), 113-133 (WNIGIILFLTTMATAFVGYVL), and 178-198 (FFAFHFILPFIITAFALVHLL). Positions 83 and 97 each coordinate heme b. Heme b-binding residues include His-182 and His-196. A ubiquinone is bound at residue His-201. The next 4 membrane-spanning stretches (helical) occupy residues 226–246 (TKDLLGIFLLLLVLMILALFF), 288–308 (LGGVLALVLSILILAAFPLLN), 320–340 (ITQVIYWIFIXNLLVLTWIGG), and 347–367 (XTMIGQIASITYFAIIIILIP).

It belongs to the cytochrome b family. In terms of assembly, the cytochrome bc1 complex contains 11 subunits: 3 respiratory subunits (MT-CYB, CYC1 and UQCRFS1), 2 core proteins (UQCRC1 and UQCRC2) and 6 low-molecular weight proteins (UQCRH/QCR6, UQCRB/QCR7, UQCRQ/QCR8, UQCR10/QCR9, UQCR11/QCR10 and a cleavage product of UQCRFS1). This cytochrome bc1 complex then forms a dimer. Heme b serves as cofactor.

The protein resides in the mitochondrion inner membrane. Its function is as follows. Component of the ubiquinol-cytochrome c reductase complex (complex III or cytochrome b-c1 complex) that is part of the mitochondrial respiratory chain. The b-c1 complex mediates electron transfer from ubiquinol to cytochrome c. Contributes to the generation of a proton gradient across the mitochondrial membrane that is then used for ATP synthesis. This Akodon boliviensis (Bolivian grass mouse) protein is Cytochrome b (MT-CYB).